A 92-amino-acid chain; its full sequence is UPF0250 protein XF_1271 (92 aa).

Belongs to the UPF0250 family.

The chain is UPF0250 protein XF_1271 from Xylella fastidiosa (strain 9a5c).